The primary structure comprises 2968 residues: Trinucleotide repeat-containing gene 18 protein (2968 aa).

Disordered regions lie at residues 1–24 and 139–261; these read MDGR…SGLA and GSPL…LAER. Residues 139 to 150 show a composition bias toward low complexity; the sequence is GSPLLSQLGQPS. Composition is skewed to basic and acidic residues over residues 221 to 233 and 243 to 260; these read GKKD…EEAS and QEAR…RLAE. Serine 263 is modified (phosphoserine). A compositionally biased stretch (basic and acidic residues) spans 304 to 322; that stretch reads GAKEAARQDEGARLLRRTE. Disordered regions lie at residues 304 to 356 and 381 to 488; these read GAKE…PAGV and FDER…PAAQ. Residues 327 to 351 show a composition bias toward pro residues; it reads GPRPCPSPLPPPPAPPKGPPAPPAA. Basic and acidic residues-rich tracts occupy residues 395–405, 419–431, and 464–479; these read RDARAREREAG, PLDR…EKNS, and ELLK…ERAP. A Phosphoserine modification is found at serine 611. Disordered regions lie at residues 612–679, 941–1002, 1019–1055, 1106–1190, 1212–1236, 1279–1306, 1497–1566, and 1687–1855; these read PFGG…EVRH, EHRA…SPVA, PAYA…PENV, DADG…MATP, SCAE…PGRT, LAQV…GQCP, KQRE…SDDY, and SLKS…RERA. Lysine 620 is covalently cross-linked (Glycyl lysine isopeptide (Lys-Gly) (interchain with G-Cter in SUMO2)). Basic and acidic residues-rich tracts occupy residues 651 to 660 and 941 to 955; these read LKRDPERPES and EHRA…KRGL. Residues 916 to 949 adopt a coiled-coil conformation; it reads LQQQAAQALELQRSAQLVQERLKAQEHRAEMEEK. Low complexity-rich tracts occupy residues 966-983 and 1019-1031; these read AGPG…AGPA and PAYA…SSHP. Positions 1032 to 1043 are enriched in pro residues; that stretch reads TSPPPASPPPTP. Residues 1046–1055 are compositionally biased toward basic and acidic residues; sequence TRKEEAPENV. Phosphoserine occurs at positions 1127 and 1136. Basic and acidic residues predominate over residues 1142 to 1162; it reads EPLREGPEEEPLAEREVKAEV. Over residues 1171-1181 the composition is skewed to pro residues; the sequence is ELPPLESPLPL. The stretch at 1481–1516 forms a coiled coil; that stretch reads LDFRMRLAEVQRQYKEKQRELVKLQRRRDSEDRREE. Positions 1497 to 1519 are enriched in basic and acidic residues; it reads KQRELVKLQRRRDSEDRREEPHR. Over residues 1520–1534 the composition is skewed to basic residues; it reads SLARRGPGRPRKRTH. Serine 1540 carries the post-translational modification Phosphoserine. Low complexity predominate over residues 1549 to 1563; it reads GHSSGKLSSKSLLTS. Residues 1816–1842 show a composition bias toward acidic residues; it reads SSEESFDQDESSEEEDEEEELEEEDEA. Serine 1857 and serine 1863 each carry phosphoserine. Disordered stretches follow at residues 1912 to 2148 and 2295 to 2771; these read YTDS…LTPA and LLVP…RLPS. 2 stretches are compositionally biased toward basic and acidic residues: residues 1957–1968 and 1993–2004; these read SPDKAKLAVEKG and LWTRRRSERIFL. The span at 2007–2024 shows a compositional bias: low complexity; sequence ASAAAPAPVSTAPATKTS. Basic and acidic residues predominate over residues 2034-2046; it reads PRKDAGRAKDRKD. The span at 2069–2085 shows a compositional bias: low complexity; that stretch reads ALPSEARAPHASSLTAA. A compositionally biased stretch (basic and acidic residues) spans 2093–2103; the sequence is KGKEVKKENRG. Threonine 2146 is subject to Phosphothreonine. The span at 2307 to 2316 shows a compositional bias: basic and acidic residues; it reads TSKDTGEGKD. The segment covering 2329 to 2338 has biased composition (basic residues); it reads ARGRGRKPSA. The segment covering 2365-2374 has biased composition (low complexity); it reads EPSSTPGSKK. A compositionally biased stretch (basic and acidic residues) spans 2375-2384; it reads SPPEPVDKRA. Residues 2390–2401 show a composition bias toward pro residues; the sequence is RPAPPQPSPAPP. Positions 2411-2433 are enriched in low complexity; the sequence is PFAELPAPATSLAPAPLITMPAT. Basic and acidic residues-rich tracts occupy residues 2441–2468 and 2477–2487; these read RAAE…DHEG and AKEALLLREDP. Low complexity-rich tracts occupy residues 2559–2580 and 2603–2671; these read SSSS…SGSE and SAAS…SSSS. Residues 2673 to 2685 show a composition bias toward acidic residues; it reads TDEDSSCSSDDEA. Over residues 2723–2736 the composition is skewed to pro residues; that stretch reads APQPQAPPPQPTQP. Serine 2771 is modified (phosphoserine). One can recognise a BAH domain in the interval 2817 to 2962; that stretch reads EMIRIGDCAV…PTTGMIFSTD (146 aa).

This chain is Trinucleotide repeat-containing gene 18 protein, found in Homo sapiens (Human).